The chain runs to 330 residues: Transcription factor TGA6 (330 aa).

The segment covering 1-13 (MADTSSRTDVSTD) has biased composition (polar residues). Residues 1 to 45 (MADTSSRTDVSTDGDTDHRDLGSDRGHMHAAASDSSDRSKDKLDQ) are disordered. Composition is skewed to basic and acidic residues over residues 15–27 (DTDH…DRGH) and 35–45 (SSDRSKDKLDQ). The 64-residue stretch at 44-107 (DQKTLRRLAQ…SSGDQAHSTG (64 aa)) folds into the bZIP domain. 2 coiled-coil regions span residues 45–142 (QKTL…HAGD) and 217–233 (INSL…ALSQ). The segment at 46 to 66 (KTLRRLAQNREAARKSRLRKK) is basic motif. The leucine-zipper stretch occupies residues 72-86 (LENSRLKLTQLEQEL). The DOG1 domain maps to 111-327 (ALAFDAEHSR…RALSSLWLAR (217 aa)).

Belongs to the bZIP family. In terms of assembly, binds DNA as a dimer. Interacts with NPR1, NPR3 and NPR4. Interacts with GRXC9/GRX480. In terms of tissue distribution, expressed predominantly in roots and flowers.

Its subcellular location is the nucleus. Functionally, transcriptional activator that binds specifically to the DNA sequence 5'-TGACG-3'. Recognizes ocs elements like the as-1 motif of the cauliflower mosaic virus 35S promoter. Binding to the as-1-like cis elements mediate auxin- and salicylic acid-inducible transcription. May be involved in the induction of the systemic acquired resistance (SAR) via its interaction with NPR1. Could also bind to the Hex-motif (5'-TGACGTGG-3') another cis-acting element found in plant histone promoters. In Arabidopsis thaliana (Mouse-ear cress), this protein is Transcription factor TGA6 (TGA6).